Consider the following 156-residue polypeptide: ATP synthase subunit b (156 aa).

The chain crosses the membrane as a helical span at residues 7-27; the sequence is LFAQMVVFLILAWFTMKFVWP.

This sequence belongs to the ATPase B chain family. In terms of assembly, F-type ATPases have 2 components, F(1) - the catalytic core - and F(0) - the membrane proton channel. F(1) has five subunits: alpha(3), beta(3), gamma(1), delta(1), epsilon(1). F(0) has three main subunits: a(1), b(2) and c(10-14). The alpha and beta chains form an alternating ring which encloses part of the gamma chain. F(1) is attached to F(0) by a central stalk formed by the gamma and epsilon chains, while a peripheral stalk is formed by the delta and b chains.

It is found in the cell inner membrane. F(1)F(0) ATP synthase produces ATP from ADP in the presence of a proton or sodium gradient. F-type ATPases consist of two structural domains, F(1) containing the extramembraneous catalytic core and F(0) containing the membrane proton channel, linked together by a central stalk and a peripheral stalk. During catalysis, ATP synthesis in the catalytic domain of F(1) is coupled via a rotary mechanism of the central stalk subunits to proton translocation. Functionally, component of the F(0) channel, it forms part of the peripheral stalk, linking F(1) to F(0). The chain is ATP synthase subunit b from Paraburkholderia xenovorans (strain LB400).